A 118-amino-acid polypeptide reads, in one-letter code: uncharacterized protein (118 aa).

Transmembrane regions (helical) follow at residues 6–26 (ILIL…PFMV), 43–63 (ALSC…IHVL), and 84–104 (IFKV…VLVQ).

The protein belongs to the AzlD/HI_1737/HP1330 family.

Its subcellular location is the cell membrane. This is an uncharacterized protein from Helicobacter pylori (strain J99 / ATCC 700824) (Campylobacter pylori J99).